Here is a 591-residue protein sequence, read N- to C-terminus: Aspartate--tRNA(Asp/Asn) ligase (591 aa).

Glutamate 175 serves as a coordination point for L-aspartate. The aspartate stretch occupies residues 199 to 202 (QQFK). Positions 221 and 453 each coordinate L-aspartate. 221-223 (RDE) serves as a coordination point for ATP. Glutamate 486 serves as a coordination point for ATP. An L-aspartate-binding site is contributed by arginine 493. ATP is bound at residue 538–541 (GIDR).

This sequence belongs to the class-II aminoacyl-tRNA synthetase family. Type 1 subfamily. In terms of assembly, homodimer.

It localises to the cytoplasm. It carries out the reaction tRNA(Asx) + L-aspartate + ATP = L-aspartyl-tRNA(Asx) + AMP + diphosphate. Functionally, aspartyl-tRNA synthetase with relaxed tRNA specificity since it is able to aspartylate not only its cognate tRNA(Asp) but also tRNA(Asn). Reaction proceeds in two steps: L-aspartate is first activated by ATP to form Asp-AMP and then transferred to the acceptor end of tRNA(Asp/Asn). This chain is Aspartate--tRNA(Asp/Asn) ligase, found in Cereibacter sphaeroides (strain ATCC 17029 / ATH 2.4.9) (Rhodobacter sphaeroides).